We begin with the raw amino-acid sequence, 166 residues long: MNIRQQLTQLLTLGYVFASAFMLWKTLSVVANLHSPIVVVLSGSMEPAFQRGDILFLWNRDEKQKVGDIVVYEIEGKTIPIVHRVLREHHNLEKQLLLTKGDNNAVDDLSLYAKKQSYLNRKNDLVGTVKGYLPFIGYVTILISENQYFKFGLLGLLGLSSLFSNE.

Topologically, residues 1–9 are cytoplasmic; the sequence is MNIRQQLTQ. Residues 10-30 form a helical; Signal-anchor for type II membrane protein membrane-spanning segment; the sequence is LLTLGYVFASAFMLWKTLSVV. Topologically, residues 31–166 are lumenal; sequence ANLHSPIVVV…LGLSSLFSNE (136 aa). Residues Ser44, His83, and Asp108 each act as charge relay system in the active site. Residues 152-163 form a C-terminal short (CTS) helix region; sequence GLLGLLGLSSLF.

It belongs to the peptidase S26B family. Component of the signal peptidase complex (SPC) composed of a catalytic subunit SEC11 and three accessory subunits SPC1, SPC2 and SPC3. The complex induces a local thinning of the ER membrane which is used to measure the length of the signal peptide (SP) h-region of protein substrates. This ensures the selectivity of the complex towards h-regions shorter than 18-20 amino acids. SPC associates with the translocon complex.

The protein localises to the endoplasmic reticulum membrane. It catalyses the reaction Cleavage of hydrophobic, N-terminal signal or leader sequences from secreted and periplasmic proteins.. Catalytic component of the signal peptidase complex (SPC) which catalyzes the cleavage of N-terminal signal sequences from nascent proteins as they are translocated into the lumen of the endoplasmic reticulum. Specifically cleaves N-terminal signal peptides that contain a hydrophobic alpha-helix (h-region) shorter than 18-20 amino acids. In Lodderomyces elongisporus (strain ATCC 11503 / CBS 2605 / JCM 1781 / NBRC 1676 / NRRL YB-4239) (Yeast), this protein is Signal peptidase complex catalytic subunit SEC11 (SEC11).